Consider the following 856-residue polypeptide: MREMGTGDSASRLILWFCLGFLILGVGFVQCGVTYDRKALLINGQRRILFSGSIHYPRSTPDMWEDLIQKAKDGGIDVIETYVFWNLHEPSPGKYDFEGRNDLVRFVKTIHKAGLYAHLRIGPYVCAEWNFGGFPVWLKYVPGISFRTDNEPFKRAMKGFTERIVELMKSENLFESQGGPIILSQIENEYGRQGQLLGAEGHNYMTWAAKMAIATETGVPWVMCKEDDAPDPVINTCNGFYCDSFAPNKPYKPLIWTEAWSGWFTEFGGPMHHRPVQDLAFGVARFIQKGGSFVNYYMYHGGTNFGRTAGGPFVTTSYDYDAPIDEYGLIRQPKYGHLKELHRAIKMCEKALVSADPVVTSIGNKQQAHVYSAESGDCSAFLANYDTESAARVLFNNVHYNLPPWSISILPDCRNAVFNTAKVGVQTSQMEMLPTDTKNFQWESYLEDLSSLDDSSTFTTHGLLEQINVTRDTSDYLWYMTSVDIGDSESFLHGGELPTLIIQSTGHAVHIFVNGQLSGSAFGTRQNRRFTYQGKINLHSGTNRIALLSVAVGLPNVGGHFESWNTGILGPVALHGLSQGKMDLSWQKWTYQVGLKGEAMNLAFPTNTPSIGWMDASLTVQKPQPLTWHKTYFDAPEGNEPLALDMEGMGKGQIWVNGESIGRYWTAFATGDCSHCSYTGTYKPNKCQTGCGQPTQRWYHVPRAWLKPSQNLLVIFEELGGNPSTVSLVKRSVSGVCAEVSEYHPNIKNWQIESYGKGQTFHRPKVHLKCSPGQAIASIKFASFGTPLGTCGSYQQGECHAATSYAILERKCVGKARCAVTISNSNFGKDPCPNVLKRLTVEAVCAPETSVSTWRP.

Positions 1-31 are cleaved as a signal peptide; the sequence is MREMGTGDSASRLILWFCLGFLILGVGFVQC. The Proton donor role is filled by Glu-189. The active-site Nucleophile is the Glu-258. An N-linked (GlcNAc...) asparagine glycan is attached at Asn-468. Residues 760-846 form the SUEL-type lectin domain; that stretch reads TFHRPKVHLK…KRLTVEAVCA (87 aa).

This sequence belongs to the glycosyl hydrolase 35 family. As to expression, ubiquitous.

It is found in the secreted. The protein localises to the extracellular space. Its subcellular location is the apoplast. The enzyme catalyses Hydrolysis of terminal non-reducing beta-D-galactose residues in beta-D-galactosides.. This chain is Beta-galactosidase 3 (BGAL3), found in Arabidopsis thaliana (Mouse-ear cress).